A 1051-amino-acid polypeptide reads, in one-letter code: Kinesin-like protein KIN-UC (1051 aa).

Composition is skewed to low complexity over residues 1 to 12 (MSSSNSSSAVRS), 28 to 39 (NSNHAVSLSSSS), and 64 to 90 (SASSSSSSSSVSASSPSTRRSGTPVRR). 2 disordered regions span residues 1–39 (MSSSNSSSAVRSSAKHAAERIQQHLPPNSNHAVSLSSSS) and 51–109 (PGIA…RVSV). A Kinesin motor domain is found at 104 to 441 (RVRVSVRVRP…IMFGQRAMKI (338 aa)). 189 to 196 (GQTGTGKT) contributes to the ATP binding site. Positions 411-419 (RTSLIITIG) match the D-BOX motif. Coiled-coil stretches lie at residues 452 to 534 (DYES…QKDQ) and 568 to 761 (DTSQ…KRYM). Positions 753–766 (NVVEEKRYMKEDLS) are enriched in basic and acidic residues. The disordered stretch occupies residues 753-788 (NVVEEKRYMKEDLSKGSAESGAQTGSQRSQGLKKSL). Residues 772 to 788 (SGAQTGSQRSQGLKKSL) are compositionally biased toward polar residues. ARM repeat units follow at residues 792 to 831 (RATMARLCEEVGIQKILQLIKSEDLEVQIQAVKVVANLAA), 833 to 873 (EANQ…NLAM), and 875 to 915 (EKSQ…NLCG). Residues 917-956 (EKFLKLLKEEEGIKGLLTMAQSGNIDIIAQVARGMANFAK) form an ARM 4; degenerate repeat.

The protein belongs to the TRAFAC class myosin-kinesin ATPase superfamily. Kinesin family. Ungrouped subfamily. Interacts (via C-terminus) with NEK5. Expressed in young root hair-forming cells and in root hair-producing cells at the boundary between the hypocotyl and root. Expressed in cotyledons, young leaves, trichomes and flowers.

Its subcellular location is the cytoplasm. It is found in the cytoskeleton. It localises to the spindle. The protein localises to the phragmoplast. Acts as a plus-end microtubule-dependent motor protein. Involved in the control of root hair tip growth by promoting microtubule depolymerization and limiting the accumulation of endoplasmic microtubules. In vitro, binds to polymerized actin through ARM repeats, and to polymerized tubulin through N-terminal motor domain. This chain is Kinesin-like protein KIN-UC, found in Arabidopsis thaliana (Mouse-ear cress).